Reading from the N-terminus, the 429-residue chain is Palmitoyltransferase SWF1 (429 aa).

Over 1–3 (MGT) the chain is Lumenal. Residues 4 to 24 (IAIIAAVILGISFMTFVAFFG) traverse the membrane as a helical segment. At 25–79 (RLPALRNTPISFLHRLIWIHLPNGILTVDRTLTNGRLTTSLTRLGRHLWYDQHPT) the chain is on the cytoplasmic side. The chain crosses the membrane as a helical span at residues 80–100 (ILIFFFLLLSVGEYLYLPVAW). Topologically, residues 101 to 112 (PHFSFTHKFFGT) are lumenal. Residues 113–133 (IAILCPYIFLYLSAYTDPGVI) form a helical membrane-spanning segment. Topologically, residues 134–201 (NAKTHVREMA…CVGANNQRWF (68 aa)) are cytoplasmic. One can recognise a DHHC domain in the interval 156 to 206 (TSCETCHLLKPARSKHCSICKKCVGRMDHHCIFINNCVGANNQRWFILLLL). A helical membrane pass occupies residues 202 to 222 (ILLLLSTAILTLYGGVLGLVI). Over 223-274 (IRAKIQARFPYWTLMPWWTSTQAWNSGDLDFHRWLLLWSWGLQSGVAMGGVT) the chain is Lumenal. A helical membrane pass occupies residues 275 to 295 (LLALLTTPLVWGLLGYHLWLV). Over 296 to 429 (YCGTTTNESM…ERGRNRRRSS (134 aa)) the chain is Cytoplasmic. Positions 408–421 (GRSPVDEREFGRER) are enriched in basic and acidic residues. The disordered stretch occupies residues 408–429 (GRSPVDEREFGRERGRNRRRSS).

The protein belongs to the DHHC palmitoyltransferase family. SWF1 subfamily.

The protein resides in the endoplasmic reticulum membrane. It catalyses the reaction L-cysteinyl-[protein] + hexadecanoyl-CoA = S-hexadecanoyl-L-cysteinyl-[protein] + CoA. Functionally, palmitoyltransferase that targets several endosomal SNAREs. Palmitoylates the SNAREs at cysteine residues close to the cytoplasmic end of their transmembrane domain. May have a role in the cellular quality control of transmembrane domain-containing proteins. This is Palmitoyltransferase SWF1 (swf-1) from Neurospora crassa (strain ATCC 24698 / 74-OR23-1A / CBS 708.71 / DSM 1257 / FGSC 987).